Reading from the N-terminus, the 480-residue chain is Proline--tRNA ligase (480 aa).

The protein belongs to the class-II aminoacyl-tRNA synthetase family. ProS type 3 subfamily. In terms of assembly, homodimer.

Its subcellular location is the cytoplasm. The catalysed reaction is tRNA(Pro) + L-proline + ATP = L-prolyl-tRNA(Pro) + AMP + diphosphate. Catalyzes the attachment of proline to tRNA(Pro) in a two-step reaction: proline is first activated by ATP to form Pro-AMP and then transferred to the acceptor end of tRNA(Pro). This chain is Proline--tRNA ligase, found in Roseiflexus castenholzii (strain DSM 13941 / HLO8).